The sequence spans 256 residues: 5'-nucleotidase SurE (256 aa).

A divalent metal cation contacts are provided by Asp-8, Asp-9, Ser-40, and Asn-92.

This sequence belongs to the SurE nucleotidase family. The cofactor is a divalent metal cation.

Its subcellular location is the cytoplasm. The catalysed reaction is a ribonucleoside 5'-phosphate + H2O = a ribonucleoside + phosphate. Its function is as follows. Nucleotidase that shows phosphatase activity on nucleoside 5'-monophosphates. The polypeptide is 5'-nucleotidase SurE (Rhizobium meliloti (strain 1021) (Ensifer meliloti)).